A 38-amino-acid chain; its full sequence is Iota-conotoxin-like L11.5 (38 aa).

4 disulfides stabilise this stretch: Cys-5/Cys-19, Cys-12/Cys-24, Cys-18/Cys-29, and Cys-23/Cys-36.

Belongs to the conotoxin I1 superfamily. In terms of tissue distribution, expressed by the venom duct.

It localises to the secreted. In terms of biological role, iota-conotoxins bind to voltage-gated sodium channels (Nav) and act as agonists by shifting the voltage-dependence of activation to more hyperpolarized levels. Produces general excitatory symptoms. The sequence is that of Iota-conotoxin-like L11.5 from Conus lynceus (Lynceus cone).